The chain runs to 406 residues: Probable tRNA sulfurtransferase (406 aa).

Positions 62-167 (AEVSNRLTKV…QDATYLSFED (106 aa)) constitute a THUMP domain. ATP contacts are provided by residues 185–186 (ML), 210–211 (HF), Arg267, Gly289, and Gln298.

It belongs to the ThiI family.

Its subcellular location is the cytoplasm. The enzyme catalyses [ThiI sulfur-carrier protein]-S-sulfanyl-L-cysteine + a uridine in tRNA + 2 reduced [2Fe-2S]-[ferredoxin] + ATP + H(+) = [ThiI sulfur-carrier protein]-L-cysteine + a 4-thiouridine in tRNA + 2 oxidized [2Fe-2S]-[ferredoxin] + AMP + diphosphate. It catalyses the reaction [ThiS sulfur-carrier protein]-C-terminal Gly-Gly-AMP + S-sulfanyl-L-cysteinyl-[cysteine desulfurase] + AH2 = [ThiS sulfur-carrier protein]-C-terminal-Gly-aminoethanethioate + L-cysteinyl-[cysteine desulfurase] + A + AMP + 2 H(+). It participates in cofactor biosynthesis; thiamine diphosphate biosynthesis. Its function is as follows. Catalyzes the ATP-dependent transfer of a sulfur to tRNA to produce 4-thiouridine in position 8 of tRNAs, which functions as a near-UV photosensor. Also catalyzes the transfer of sulfur to the sulfur carrier protein ThiS, forming ThiS-thiocarboxylate. This is a step in the synthesis of thiazole, in the thiamine biosynthesis pathway. The sulfur is donated as persulfide by IscS. This is Probable tRNA sulfurtransferase from Lactococcus lactis subsp. cremoris (strain MG1363).